The following is a 209-amino-acid chain: Ribonuclease HII (209 aa).

An RNase H type-2 domain is found at 6-209 (SLEAGIDEAG…IKRMTNSRLF (204 aa)). A divalent metal cation is bound by residues D12, E13, and D108.

This sequence belongs to the RNase HII family. The cofactor is Mn(2+). It depends on Mg(2+) as a cofactor.

Its subcellular location is the cytoplasm. The catalysed reaction is Endonucleolytic cleavage to 5'-phosphomonoester.. Its function is as follows. Endonuclease that specifically degrades the RNA of RNA-DNA hybrids. The protein is Ribonuclease HII of Caldivirga maquilingensis (strain ATCC 700844 / DSM 13496 / JCM 10307 / IC-167).